The sequence spans 156 residues: Small ribosomal subunit protein uS7 (156 aa).

It belongs to the universal ribosomal protein uS7 family. As to quaternary structure, part of the 30S ribosomal subunit. Contacts proteins S9 and S11.

In terms of biological role, one of the primary rRNA binding proteins, it binds directly to 16S rRNA where it nucleates assembly of the head domain of the 30S subunit. Is located at the subunit interface close to the decoding center, probably blocks exit of the E-site tRNA. This Gemmatimonas aurantiaca (strain DSM 14586 / JCM 11422 / NBRC 100505 / T-27) protein is Small ribosomal subunit protein uS7.